The following is a 208-amino-acid chain: MSQGNLYILSAPSGAGKSSLISALLEQDQANTMMVSVSHTTRQPRPGEENGVHYHFVSVEEFELLINEGAFLEYAKVFGGNYYGTSLPTIEKNLAQGIDVFLDIDWQGAQQIRKKVPSVKSIFILPPSLAELEKRLIGRGQDSAEVIADRMSKAMDEISHYNEYDYVIINDDFTRALADLVHILRAEKLTLAYQTEQNQALINQLLAK.

The 182-residue stretch at G4–R185 folds into the Guanylate kinase-like domain. An ATP-binding site is contributed by A11–S18.

This sequence belongs to the guanylate kinase family.

The protein resides in the cytoplasm. It carries out the reaction GMP + ATP = GDP + ADP. Essential for recycling GMP and indirectly, cGMP. This Mannheimia succiniciproducens (strain KCTC 0769BP / MBEL55E) protein is Guanylate kinase.